A 250-amino-acid chain; its full sequence is Exosome complex component Rrp41 (250 aa).

Belongs to the RNase PH family. Rrp41 subfamily. As to quaternary structure, component of the archaeal exosome complex. Forms a hexameric ring-like arrangement composed of 3 Rrp41-Rrp42 heterodimers. The hexameric ring associates with a trimer of Rrp4 and/or Csl4 subunits.

The protein resides in the cytoplasm. Functionally, catalytic component of the exosome, which is a complex involved in RNA degradation. Has 3'-&gt;5' exoribonuclease activity. Can also synthesize heteromeric RNA-tails. In Pyrococcus furiosus (strain ATCC 43587 / DSM 3638 / JCM 8422 / Vc1), this protein is Exosome complex component Rrp41.